Here is a 223-residue protein sequence, read N- to C-terminus: 2-C-methyl-D-erythritol 4-phosphate cytidylyltransferase (223 aa).

It belongs to the IspD/TarI cytidylyltransferase family. IspD subfamily.

The enzyme catalyses 2-C-methyl-D-erythritol 4-phosphate + CTP + H(+) = 4-CDP-2-C-methyl-D-erythritol + diphosphate. The protein operates within isoprenoid biosynthesis; isopentenyl diphosphate biosynthesis via DXP pathway; isopentenyl diphosphate from 1-deoxy-D-xylulose 5-phosphate: step 2/6. In terms of biological role, catalyzes the formation of 4-diphosphocytidyl-2-C-methyl-D-erythritol from CTP and 2-C-methyl-D-erythritol 4-phosphate (MEP). The chain is 2-C-methyl-D-erythritol 4-phosphate cytidylyltransferase from Synechococcus sp. (strain WH7803).